The chain runs to 206 residues: MFEHYLSLFVRAVFVENMALAFFLGMCTFIAISKKIQTAIGLGIAVVVVLAITVPVNNLILHNLLEEGALSWTGSEQLASLDLRFLGLLSYIGVIAAIVQILEMTLDKYVPSLYNALGIFLPLITVNCAIMGASLFMVERDYTFGESVVYGVGAGVGWALAITLLAGIREKLKYSDVPDGLKGLGITFITVGLMSLGFMSFSGVQL.

Helical transmembrane passes span 12–32 (AVFV…FIAI), 36–56 (IQTA…TVPV), 85–105 (FLGL…LEMT), 118–138 (GIFL…LFMV), 148–168 (VVYG…LAGI), and 184–204 (LGIT…FSGV).

Belongs to the NqrDE/RnfAE family. Composed of six subunits; NqrA, NqrB, NqrC, NqrD, NqrE and NqrF.

It is found in the cell inner membrane. It carries out the reaction a ubiquinone + n Na(+)(in) + NADH + H(+) = a ubiquinol + n Na(+)(out) + NAD(+). In terms of biological role, NQR complex catalyzes the reduction of ubiquinone-1 to ubiquinol by two successive reactions, coupled with the transport of Na(+) ions from the cytoplasm to the periplasm. NqrA to NqrE are probably involved in the second step, the conversion of ubisemiquinone to ubiquinol. The polypeptide is Na(+)-translocating NADH-quinone reductase subunit E (Alcanivorax borkumensis (strain ATCC 700651 / DSM 11573 / NCIMB 13689 / SK2)).